Here is a 139-residue protein sequence, read N- to C-terminus: Aspartate 1-decarboxylase (139 aa).

The Schiff-base intermediate with substrate; via pyruvic acid role is filled by serine 25. Serine 25 carries the post-translational modification Pyruvic acid (Ser). Threonine 57 contributes to the substrate binding site. Tyrosine 58 functions as the Proton donor in the catalytic mechanism. 73 to 75 (GAA) lines the substrate pocket. Residues 116–139 (ELGSDPAHAPEGSGLTSPRSLTFA) form a disordered region. A compositionally biased stretch (polar residues) spans 129-139 (GLTSPRSLTFA).

Belongs to the PanD family. In terms of assembly, heterooctamer of four alpha and four beta subunits. Pyruvate is required as a cofactor. In terms of processing, is synthesized initially as an inactive proenzyme, which is activated by self-cleavage at a specific serine bond to produce a beta-subunit with a hydroxyl group at its C-terminus and an alpha-subunit with a pyruvoyl group at its N-terminus.

The protein resides in the cytoplasm. It carries out the reaction L-aspartate + H(+) = beta-alanine + CO2. It functions in the pathway cofactor biosynthesis; (R)-pantothenate biosynthesis; beta-alanine from L-aspartate: step 1/1. Catalyzes the pyruvoyl-dependent decarboxylation of aspartate to produce beta-alanine. The protein is Aspartate 1-decarboxylase of Nocardia farcinica (strain IFM 10152).